The primary structure comprises 554 residues: Glutamine--tRNA ligase (554 aa).

Positions 34–44 (PEPNGYLHIGH) match the 'HIGH' region motif. Residues 35 to 37 (EPN) and 41 to 47 (HIGHAKS) each bind ATP. Positions 67 and 212 each coordinate L-glutamine. ATP-binding positions include threonine 231, 261 to 262 (RL), and 269 to 271 (MSK). The 'KMSKS' region motif lies at 268–272 (VMSKR). Residues 317–324 (TKQDNTIE) form an interaction with tRNA region.

It belongs to the class-I aminoacyl-tRNA synthetase family. Monomer.

It is found in the cytoplasm. It catalyses the reaction tRNA(Gln) + L-glutamine + ATP = L-glutaminyl-tRNA(Gln) + AMP + diphosphate. The protein is Glutamine--tRNA ligase of Escherichia coli (strain 55989 / EAEC).